The primary structure comprises 302 residues: MKVIKTLSIINFFIFVTFNIKNESKYSNTFINNAYNMSIRRSMEESKPPTGAVAGSGAGAGSGAGAVAGSGAGAVAGSGAGAVAGSGAGAVAGSGAGAVAGSGAGAVAGSGAGNGANPGADAERSPSTPATTTTTTTTNDAEASTSTSSENRNHNNAETNPKGKGEVQKPNQANKETQNNSNVQQDSQTKSNVPRTQDADTKSPTAQPEQAENSAPTAEQTESPELQSAPENKGTGQHGHMHGSRNNHPQNTSDSQKECTDGNKENCGAATSLLNNSSNIASINKFVVLISATLVLSFAIFI.

The N-terminal stretch at 1-20 (MKVIKTLSIINFFIFVTFNI) is a signal peptide. N-linked (GlcNAc...) asparagine glycans are attached at residues Asn22 and Asn36. Residues 44–228 (EESKPPTGAV…EQTESPELQS (185 aa)) form a polymorphic region region. Residues 55-60 (GSGAGA) form a 1; partial repeat. Positions 55–113 (GSGAGAGSGAGAVAGSGAGAVAGSGAGAVAGSGAGAVAGSGAGAVAGSGAGAVAGSGAG) are 8 X 8 AA tandem repeats of G-S-G-A-G-A-V-A. A run of 6 repeats spans residues 61-68 (GSGAGAVA), 69-76 (GSGAGAVA), 77-84 (GSGAGAVA), 85-92 (GSGAGAVA), 93-100 (GSGAGAVA), and 101-108 (GSGAGAVA). An 8; partial repeat occupies 109–113 (GSGAG). A disordered region spans residues 114 to 263 (NGANPGADAE…DSQKECTDGN (150 aa)). The segment covering 125 to 150 (SPSTPATTTTTTTTNDAEASTSTSSE) has biased composition (low complexity). Residues 151 to 167 (NRNHNNAETNPKGKGEV) are compositionally biased toward basic and acidic residues. Composition is skewed to polar residues over residues 169 to 195 (KPNQ…NVPR) and 202 to 230 (KSPT…QSAP). A glycan (N-linked (GlcNAc...) asparagine) is linked at Asn179. Asn251 is a glycosylation site (N-linked (GlcNAc...) asparagine). Cys259 and Cys267 are joined by a disulfide. 2 N-linked (GlcNAc...) asparagine glycosylation sites follow: Asn275 and Asn276. Asn276 carries GPI-anchor amidated asparagine lipidation. Positions 277–302 (SSNIASINKFVVLISATLVLSFAIFI) are cleaved as a propeptide — removed in mature form.

It localises to the cell membrane. Its function is as follows. May play a role in the merozoite attachment to the erythrocyte. This Plasmodium falciparum (isolate tak 9) protein is Merozoite surface protein 2.